Here is a 295-residue protein sequence, read N- to C-terminus: Pyridoxal 5'-phosphate synthase subunit PdxS (295 aa).

Asp-25 contacts D-ribose 5-phosphate. Residue Lys-82 is the Schiff-base intermediate with D-ribose 5-phosphate of the active site. Position 154 (Gly-154) interacts with D-ribose 5-phosphate. Arg-166 is a binding site for D-glyceraldehyde 3-phosphate. Residues Gly-215 and 236 to 237 (GS) each bind D-ribose 5-phosphate.

This sequence belongs to the PdxS/SNZ family. In the presence of PdxT, forms a dodecamer of heterodimers.

It carries out the reaction aldehydo-D-ribose 5-phosphate + D-glyceraldehyde 3-phosphate + L-glutamine = pyridoxal 5'-phosphate + L-glutamate + phosphate + 3 H2O + H(+). It functions in the pathway cofactor biosynthesis; pyridoxal 5'-phosphate biosynthesis. Functionally, catalyzes the formation of pyridoxal 5'-phosphate from ribose 5-phosphate (RBP), glyceraldehyde 3-phosphate (G3P) and ammonia. The ammonia is provided by the PdxT subunit. Can also use ribulose 5-phosphate and dihydroxyacetone phosphate as substrates, resulting from enzyme-catalyzed isomerization of RBP and G3P, respectively. The chain is Pyridoxal 5'-phosphate synthase subunit PdxS from Bacillus cytotoxicus (strain DSM 22905 / CIP 110041 / 391-98 / NVH 391-98).